The following is a 302-amino-acid chain: N-acetylmuramic acid 6-phosphate etherase (302 aa).

Residues 55–218 enclose the SIS domain; that stretch reads AYPKFDQGGR…STGIMVKSGK (164 aa). Residue glutamate 83 is the Proton donor of the active site. Glutamate 114 is a catalytic residue.

Belongs to the GCKR-like family. MurNAc-6-P etherase subfamily. Homodimer.

It carries out the reaction N-acetyl-D-muramate 6-phosphate + H2O = N-acetyl-D-glucosamine 6-phosphate + (R)-lactate. It functions in the pathway amino-sugar metabolism; N-acetylmuramate degradation. Specifically catalyzes the cleavage of the D-lactyl ether substituent of MurNAc 6-phosphate, producing GlcNAc 6-phosphate and D-lactate. The sequence is that of N-acetylmuramic acid 6-phosphate etherase from Levilactobacillus brevis (strain ATCC 367 / BCRC 12310 / CIP 105137 / JCM 1170 / LMG 11437 / NCIMB 947 / NCTC 947) (Lactobacillus brevis).